A 263-amino-acid polypeptide reads, in one-letter code: Orotidine 5'-phosphate decarboxylase (263 aa).

Residues aspartate 38, 60-62 (KTH), 91-100 (DRKFADIGNT), tyrosine 213, and arginine 232 contribute to the substrate site. Lysine 93 (proton donor) is an active-site residue.

Belongs to the OMP decarboxylase family.

It catalyses the reaction orotidine 5'-phosphate + H(+) = UMP + CO2. The protein operates within pyrimidine metabolism; UMP biosynthesis via de novo pathway; UMP from orotate: step 2/2. This chain is Orotidine 5'-phosphate decarboxylase (PYR4), found in Rhizomucor pusillus.